The sequence spans 451 residues: Chromosomal replication initiator protein DnaA (451 aa).

The tract at residues 1–73 (MNAHPKEIWE…IRSLQMVTSQ (73 aa)) is domain I, interacts with DnaA modulators. The interval 73-112 (QKYNVKFLISSELPEEFLTLDTINEQNIKGSIIVSDEMSA) is domain II. Positions 113–329 (MLNPKYTFTS…GALIRIVAFS (217 aa)) are domain III, AAA+ region. Gly-157, Gly-159, Lys-160, and Thr-161 together coordinate ATP. The interval 330–451 (SLTNKEISVD…NDLTKRLDQQ (122 aa)) is domain IV, binds dsDNA.

The protein belongs to the DnaA family. Oligomerizes as a right-handed, spiral filament on DNA at oriC.

Its subcellular location is the cytoplasm. In terms of biological role, plays an essential role in the initiation and regulation of chromosomal replication. ATP-DnaA binds to the origin of replication (oriC) to initiate formation of the DNA replication initiation complex once per cell cycle. Binds the DnaA box (a 9 base pair repeat at the origin) and separates the double-stranded (ds)DNA. Forms a right-handed helical filament on oriC DNA; dsDNA binds to the exterior of the filament while single-stranded (ss)DNA is stabiized in the filament's interior. The ATP-DnaA-oriC complex binds and stabilizes one strand of the AT-rich DNA unwinding element (DUE), permitting loading of DNA polymerase. After initiation quickly degrades to an ADP-DnaA complex that is not apt for DNA replication. Binds acidic phospholipids. The polypeptide is Chromosomal replication initiator protein DnaA (Clostridium kluyveri (strain NBRC 12016)).